Here is a 595-residue protein sequence, read N- to C-terminus: uncharacterized protein (595 aa).

The segment at 112 to 180 (VRPPGYDPES…KDVFGRALPT (69 aa)) is disordered. Composition is skewed to basic and acidic residues over residues 120–133 (ESAK…EKHK) and 161–174 (RTQE…KDVF). The CCHC-type; degenerate zinc finger occupies 211-228 (VKCLRCGNFGHQSGDRDC). Disordered stretches follow at residues 254 to 290 (HTDP…IVAE) and 310 to 595 (KSMS…RRRN). Over residues 256 to 267 (DPSEPLKWELKQ) the composition is skewed to basic and acidic residues. Basic residues-rich tracts occupy residues 316–331 (KKRK…KHSS) and 351–364 (RGSK…KKSK). Composition is skewed to basic and acidic residues over residues 414 to 428 (HYYD…EIVD), 470 to 539 (VSEK…HVYE), and 547 to 565 (FSDR…ESNR). Residues 584–595 (RKHRYSTNRRRN) show a composition bias toward basic residues.

This is an uncharacterized protein from Arabidopsis thaliana (Mouse-ear cress).